We begin with the raw amino-acid sequence, 121 residues long: Basic phospholipase A2 homolog BnSP-7 (121 aa).

Intrachain disulfides connect Cys26/Cys115, Cys28/Cys44, Cys43/Cys95, Cys49/Cys121, Cys50/Cys88, Cys57/Cys81, and Cys75/Cys86. An important for membrane-damaging activities in eukaryotes and bacteria; heparin-binding region spans residues 105–117 (KKYRYHLKPFCKK).

It belongs to the phospholipase A2 family. Group II subfamily. K49 sub-subfamily. Homodimer; non-covalently linked (probable alternative/compact dimer conformation in solution). As to expression, expressed by the venom gland.

It localises to the secreted. Its activity is regulated as follows. Heparin inhibits the neuromuscular effect, myotoxin activity and edema-inducing effects. Bromophenacyl bromide (BPB) inhibits the neuromuscular effect, the myotoxin activity and edema-inducing effects. Its function is as follows. Snake venom phospholipase A2 (PLA2) that lacks enzymatic activity. Is myotoxic and displays edema-inducing activity. Displays bactericidal activity and promotes the blockage of the neuromuscular contraction of the chick biventer cervicis muscle. Also disrupts artificial membranes, and provokes tissue damages characterized by edema, necrosis and inflammation. May act as pro-inflammatory mediators, inducing metalloproteinase and cytokine production from the inflammatory and satellite cells. A model of myotoxic mechanism has been proposed: an apo Lys49-PLA2 is activated by the entrance of a hydrophobic molecule (e.g. fatty acid) at the hydrophobic channel of the protein leading to a reorientation of a monomer. This reorientation causes a transition between 'inactive' to 'active' states, causing alignment of C-terminal and membrane-docking sites (MDoS) side-by-side and putting the membrane-disruption sites (MDiS) in the same plane, exposed to solvent and in a symmetric position for both monomers. The MDoS region stabilizes the toxin on membrane by the interaction of charged residues with phospholipid head groups. Subsequently, the MDiS region destabilizes the membrane with penetration of hydrophobic residues. This insertion causes a disorganization of the membrane, allowing an uncontrolled influx of ions (i.e. calcium and sodium), and eventually triggering irreversible intracellular alterations and cell death. The polypeptide is Basic phospholipase A2 homolog BnSP-7 (Bothrops pauloensis (Neuwied's lancehead)).